A 279-amino-acid polypeptide reads, in one-letter code: Eukaryotic translation initiation factor 3 subunit J (279 aa).

Disordered regions lie at residues methionine 1–serine 74 and glutamate 229–methionine 279. The segment covering tryptophan 20–glutamate 39 has biased composition (acidic residues). Positions aspartate 34–serine 74 form a coiled coil. A compositionally biased stretch (basic and acidic residues) spans valine 40 to asparagine 67. Residues aspartate 268–methionine 279 show a composition bias toward acidic residues.

It belongs to the eIF-3 subunit J family. Component of the eukaryotic translation initiation factor 3 (eIF-3) complex.

Its subcellular location is the cytoplasm. Its function is as follows. Component of the eukaryotic translation initiation factor 3 (eIF-3) complex, which is involved in protein synthesis of a specialized repertoire of mRNAs and, together with other initiation factors, stimulates binding of mRNA and methionyl-tRNAi to the 40S ribosome. The eIF-3 complex specifically targets and initiates translation of a subset of mRNAs involved in cell proliferation. The protein is Eukaryotic translation initiation factor 3 subunit J of Meyerozyma guilliermondii (strain ATCC 6260 / CBS 566 / DSM 6381 / JCM 1539 / NBRC 10279 / NRRL Y-324) (Yeast).